Here is a 137-residue protein sequence, read N- to C-terminus: Small ribosomal subunit protein bS16 (137 aa).

Composition is skewed to basic and acidic residues over residues 80–99 and 111–125; these read KSPEEAQKGGMRKGEFKRLQ and VATEEPKAEEAKEAP. Residues 80–137 are disordered; it reads KSPEEAQKGGMRKGEFKRLQAEQAAKAQKKAVATEEPKAEEAKEAPPAESQAAEGKEE. Residues 126 to 137 are compositionally biased toward low complexity; the sequence is PAESQAAEGKEE.

Belongs to the bacterial ribosomal protein bS16 family.

This Coxiella burnetii (strain Dugway 5J108-111) protein is Small ribosomal subunit protein bS16.